The chain runs to 144 residues: MLPQDDMTDEMKSLASRLEDTTQAFYDLALIVYNLEDTTPSDAIPESLDTLIRDLKSLPDISRKVNNLIPQDVLEYIEQGRNPDVYARQFSELVQKDNQYVNGKLYAIEGFQKAFAEEIKQAYPEVSSVVDKILNEGKVESTVS.

It belongs to the Mediator complex subunit 10 family. In terms of assembly, component of the Mediator complex.

The protein resides in the cytoplasm. It localises to the nucleus. Its subcellular location is the nucleus envelope. Component of the Mediator complex, a coactivator involved in the regulated transcription of nearly all RNA polymerase II-dependent genes. Mediator functions as a bridge to convey information from gene-specific regulatory proteins to the basal RNA polymerase II transcription machinery. Mediator is recruited to promoters by direct interactions with regulatory proteins and serves as a scaffold for the assembly of a functional preinitiation complex with RNA polymerase II and the general transcription factors. This is Mediator of RNA polymerase II transcription subunit 10 (med10) from Schizosaccharomyces pombe (strain 972 / ATCC 24843) (Fission yeast).